Consider the following 447-residue polypeptide: Phosphoglucosamine mutase (447 aa).

Ser106 serves as the catalytic Phosphoserine intermediate. The Mg(2+) site is built by Ser106, Asp245, Asp247, and Asp249. Ser106 bears the Phosphoserine mark.

It belongs to the phosphohexose mutase family. Requires Mg(2+) as cofactor. Activated by phosphorylation.

It catalyses the reaction alpha-D-glucosamine 1-phosphate = D-glucosamine 6-phosphate. Functionally, catalyzes the conversion of glucosamine-6-phosphate to glucosamine-1-phosphate. This chain is Phosphoglucosamine mutase, found in Cupriavidus taiwanensis (strain DSM 17343 / BCRC 17206 / CCUG 44338 / CIP 107171 / LMG 19424 / R1) (Ralstonia taiwanensis (strain LMG 19424)).